We begin with the raw amino-acid sequence, 544 residues long: Membrane protein insertase YidC (544 aa).

Helical transmembrane passes span 13–33, 343–363, 409–429, 461–481, and 506–526; these read LSLF…SNIL, WGLS…PLTF, LGGC…YSLV, LYFV…FTQL, and MPIM…IYWI.

Belongs to the OXA1/ALB3/YidC family. Type 1 subfamily. In terms of assembly, interacts with the Sec translocase complex via SecD. Specifically interacts with transmembrane segments of nascent integral membrane proteins during membrane integration.

The protein localises to the cell inner membrane. Required for the insertion and/or proper folding and/or complex formation of integral membrane proteins into the membrane. Involved in integration of membrane proteins that insert both dependently and independently of the Sec translocase complex, as well as at least some lipoproteins. Aids folding of multispanning membrane proteins. In Borreliella burgdorferi (strain ZS7) (Borrelia burgdorferi), this protein is Membrane protein insertase YidC.